The chain runs to 359 residues: ELAV-like protein 2 (359 aa).

The interval 1–39 (METQLSNGPTCNNTANGPTTVNNNCSSPVDSGNTEDSKT) is disordered. RRM domains are found at residues 39–117 (TNLI…YARP) and 125–205 (ANLY…FANN). Position 221 is a phosphoserine (serine 221). The region spanning 276 to 354 (WCIFVYNLAP…RVLQVSFKTN (79 aa)) is the RRM 3 domain.

Belongs to the RRM elav family. Interacts with IGF2BP1. Interacts with MAP1B light chain LC1.

RNA-binding protein that binds to the 3' untranslated region (3'UTR) of target mRNAs. Seems to recognize a GAAA motif. Can bind to its own 3'UTR, the FOS 3'UTR and the ID 3'UTR. This is ELAV-like protein 2 (Elavl2) from Rattus norvegicus (Rat).